We begin with the raw amino-acid sequence, 253 residues long: 5'/3'-nucleotidase SurE (253 aa).

A divalent metal cation-binding residues include Asp8, Asp9, Ser39, and Asn92.

This sequence belongs to the SurE nucleotidase family. The cofactor is a divalent metal cation.

Its subcellular location is the cytoplasm. The catalysed reaction is a ribonucleoside 5'-phosphate + H2O = a ribonucleoside + phosphate. The enzyme catalyses a ribonucleoside 3'-phosphate + H2O = a ribonucleoside + phosphate. It carries out the reaction [phosphate](n) + H2O = [phosphate](n-1) + phosphate + H(+). Its function is as follows. Nucleotidase with a broad substrate specificity as it can dephosphorylate various ribo- and deoxyribonucleoside 5'-monophosphates and ribonucleoside 3'-monophosphates with highest affinity to 3'-AMP. Also hydrolyzes polyphosphate (exopolyphosphatase activity) with the preference for short-chain-length substrates (P20-25). Might be involved in the regulation of dNTP and NTP pools, and in the turnover of 3'-mononucleotides produced by numerous intracellular RNases (T1, T2, and F) during the degradation of various RNAs. This is 5'/3'-nucleotidase SurE from Serratia proteamaculans (strain 568).